The chain runs to 371 residues: Riboflavin biosynthesis protein RibD (371 aa).

Residues 1-122 (MEEYYMNTAI…MLEEAGIEVK (122 aa)) enclose the CMP/dCMP-type deaminase domain. Positions 1 to 144 (MEEYYMNTAI…KMFLHFMRTG (144 aa)) are deaminase. H49 contributes to the Zn(2+) binding site. E51 (proton donor) is an active-site residue. Positions 74 and 83 each coordinate Zn(2+). Residues 145–371 (LPYVTLKAAA…KDGDDVYRNR (227 aa)) are reductase. Residue A153 coordinates NADP(+). Position 167 (S167) interacts with substrate. W169 contributes to the NADP(+) binding site. R183 provides a ligand contact to substrate. Residues T195 and D199 each coordinate NADP(+). The substrate site is built by L203 and R206. T221 provides a ligand contact to NADP(+). Residue E290 participates in substrate binding. Residue 292-298 (GASVHGS) coordinates NADP(+).

The protein in the N-terminal section; belongs to the cytidine and deoxycytidylate deaminase family. In the C-terminal section; belongs to the HTP reductase family. It depends on Zn(2+) as a cofactor.

It catalyses the reaction 2,5-diamino-6-hydroxy-4-(5-phosphoribosylamino)-pyrimidine + H2O + H(+) = 5-amino-6-(5-phospho-D-ribosylamino)uracil + NH4(+). It carries out the reaction 5-amino-6-(5-phospho-D-ribitylamino)uracil + NADP(+) = 5-amino-6-(5-phospho-D-ribosylamino)uracil + NADPH + H(+). It functions in the pathway cofactor biosynthesis; riboflavin biosynthesis; 5-amino-6-(D-ribitylamino)uracil from GTP: step 2/4. The protein operates within cofactor biosynthesis; riboflavin biosynthesis; 5-amino-6-(D-ribitylamino)uracil from GTP: step 3/4. In terms of biological role, converts 2,5-diamino-6-(ribosylamino)-4(3h)-pyrimidinone 5'-phosphate into 5-amino-6-(ribosylamino)-2,4(1h,3h)-pyrimidinedione 5'-phosphate. The chain is Riboflavin biosynthesis protein RibD (ribD) from Bacillus amyloliquefaciens (Bacillus velezensis).